Here is a 1451-residue protein sequence, read N- to C-terminus: MGRLKLHSGIKAIEEEPEDFECTDSSNTTTLACMIDTEIAAVLAVMRRNVRWGGRYMSGDDQLEHSLIQSLKALRKQVFSWNQPWHTISPMLYLQPFLDVIRSDETGAPITSIALSSVYKILNLNVIDQNTANIEDAMHLVVDSVTSCRFEVTDPASEEVVLMKILQVLLACMKNKASVMLSNQHVCTVVNTCFRVVHQAGMKGELLQRVARHTMHELVRCIFSHLPDVERTETTLVNRAGSIKQEKAGVDSDYAIVSKPVEDGNANSEYDVENSMATFATGAQSLMDDGPVGPGSRKPASPYDLHIMTEPYGVPSMVEIFHFLCSLLNVVEHVGMGSRSNTIAFDEDVPLFALNLINSAIELGGSSIRHHPRLLSLIQDELFRNLMQFGLSMSPLILSMVCSIVLNLYQHLRTELKLQLEAFFSCVILRLAQGKYGPSYQQQEVAMEALVNFCRQKSFMVEMYANLDCDITCSNVFEELSNLLSKSTFPVNCPLSAMHILALDGLIAVIQGMAERISNGLTGLDLGPVHLDEYTPFWMVKCDNYSDPNHWVSFVRRRKYIKRRLMIGADHFNRDPKKGLEFLQGTHLLPDKLDPQSVACFFRYTAGLDKNLVGDFLGNHDEFCVQVLNEFAGTFDFQYMNLDTALRLFLETFRLPGESQKIQRVLEAFSERYYMQSPEILANKDAALVLSYSIIMLNTDQHNVQVKKKMTEEDFIRNNRHINGGNDLPREFLSELFHSICNNEIRTTPEQGAGFPEMTPSRWIDLMHKSKKTAPYILADSRAYLDHDMFAIMSGPTIAAISVVFDHAEHEDVYQTCIDGFLAIAKISACHHLEDVLDDLVVSLCKFTTLLNPSSVDEPVLAFGDDAKARMATITIFTIANKYGDYIRTGWRNILDCILRLHKLGLLPARVASDAADESEHSSEQGQGKPLANSLSSAHLQSMGTPRRSSGLMGRFSQLLSLDTEEPRSQPTEQQLAAHQRTLQTIQKCHIDSIFTESKFLQAESLLQLARALIWAAGRPQKGTSSPEDEDTAVFCLELLIAITLNNRDRIVLLWQGVYEHIATIAQSTVMPCNLVDKAIFGLLRICQRLLPYKESLADELLRSLQLVLKLDARVADAYCEQIAIEVSRLVKANANHIRSQAGWRTITSLLSITARHPEASESGFDAVSFVMSEGTHLYPANYVLCVDAARQFAESRVGQSERSIRALDLMGDSLEFLAKWALSAKENMGEEDFGKMSQDIGEMWLRLVQGLRKVCLDQREDVRNHALQSLQKCLGGVDGINLAHSMWSQCFDKVIFTVLDDLLEIAAGSQKDYRNMEGTLLLAIKLLSKVFLQQLQELSQLSTFCKLWLGVLTRMEKYMKVKVRGKKSDKLQESVPELLKNILLVMKTKGVLLQRSALGGDSLWELTWLHVNNIAPSMRLELFPDQESSQLGDDETVSNGLSSPENTTGS.

Residues 1–246 (MGRLKLHSGI…VNRAGSIKQE (246 aa)) are DCB domain. Residues 557-752 (RRKYIKRRLM…NEIRTTPEQG (196 aa)) enclose the SEC7 domain. Glu-658 is an active-site residue. The tract at residues 1430-1451 (SQLGDDETVSNGLSSPENTTGS) is disordered.

Homodimer. Interacts with CYP19-4/CYP5 in vitro. As to expression, stems, leaves, flowers, siliques, floral inflorescence and roots. Expressed in the whole plant (at the protein level).

The protein localises to the cytoplasm. Its subcellular location is the cytosol. The protein resides in the endosome membrane. It is found in the cell membrane. With respect to regulation, inhibited by brefeldin A (BFA). In terms of biological role, activates the ARF proteins by exchanging bound GDP for free GTP. Plays a role in vesicular protein sorting. Acts as the major regulator of endosomal vesicle trafficking but is also involved in the endocytosis process. Could function redundantly with GNL1 in the retrograde Golgi to endoplasmic reticulum trafficking. Regulates vesicle trafficking required for the coordinated polar localization of auxin efflux carriers which in turn determines the direction of auxin flow. Mediates the sorting of PIN1 from endosomal compartments to the basal plasma membrane and the polarization of PIN3 to the bottom side of hypocotyl endodermal cells. Involved in the specification of apical-basal pattern formation in the early embryo and during root formation. Required for correct cell wall organization leading to normal cell adhesion during seedling development. Also plays an essential role in hydrotropism of seedling roots. The sequence is that of ARF guanine-nucleotide exchange factor GNOM (GN) from Arabidopsis thaliana (Mouse-ear cress).